The primary structure comprises 887 residues: MIKHNLVSDLRRLFIDFFVKNGHQFFPSSPLIIKDDPSLLFTNAGMVQFKQIFTSVDGRSINTAVSSQKCLRVGGKHNDLENVGHTNRHHTFFEMLGNFSFGSYFKEHAIELAWNFVIKELALDRKRLYITVYHDDQDAFNLWKKISSFSDDKIIKIKTNDNFWSMGNVGPCGPCSEIFYDYGESVKGGLPGTPEEDGARFTEIWNLVFMEYNRTKEGELSVLPRKCIDTGMGLERIAAVMQGVHDNYDINLFKALIAMSKKESGNSSCEIAHRVIADHVRSAAFLIAEGLTPGNEGRDYILRRIIRRAARYVYMLKYTDSLMYKIFPVLIDETSNAYMADYYPELLKAKDMIISILKTEEENFKDTLVRALPLLEKELTYLSAGDVLSGDVIFRLYDTYGFPVDITLDIIKERGIRFDEKGFYDNMEQQKTRSRLSHLIKSTEQLNGKIWEDIRQNYNNTRFVGYDNFQVQSKILSMVMNNDRNVTVANVGDKVSILMDVTPFYAEAGGQQADTGLLSVVRRDGKDLFGSSNIADVTNTKNIFDGLYIHECIIKSGSLIIGDIVSAEINSHRRKDLCANHSATHLLHYILRMEIDNNIMQKGSLVGNDKLRFDFSYNMALTEKQIKLIENRMCDLIRQNHPVETNICNLQDAMDNGAIALFTEKYDNHEVRVVNIGNSKELCCGTHVKYTGEIGCFKIISESSIACGIRRIEAVTGQYAIDYFRQQEKVLYQVAESVKSPVEDVLVQIDKINRENQELKQKLWAAYFDIIDMQGVNIEKIGNINFLHGTLSGVPIDVVRKFIMKRLVKDMIMLFSNVVNHNRIYVVGVGNSLHSKVKAADFVKIINCVVKSKGGGNAQLAQISTEYIAEVNVIQHIKDELVSIFNA.

Zn(2+) contacts are provided by His581, His585, Cys683, and His687.

It belongs to the class-II aminoacyl-tRNA synthetase family. The cofactor is Zn(2+).

It localises to the cytoplasm. The enzyme catalyses tRNA(Ala) + L-alanine + ATP = L-alanyl-tRNA(Ala) + AMP + diphosphate. Functionally, catalyzes the attachment of alanine to tRNA(Ala) in a two-step reaction: alanine is first activated by ATP to form Ala-AMP and then transferred to the acceptor end of tRNA(Ala). Also edits incorrectly charged Ser-tRNA(Ala) and Gly-tRNA(Ala) via its editing domain. The chain is Alanine--tRNA ligase from Ehrlichia ruminantium (strain Gardel).